An 808-amino-acid polypeptide reads, in one-letter code: Homeobox-leucine zipper protein HDG1 (808 aa).

The tract at residues 57–121 is disordered; that stretch reads LQTNGEMSRN…KRYHRHTPKQ (65 aa). A compositionally biased stretch (basic and acidic residues) spans 79–90; the sequence is SRGEDVESRSES. Residues 108–119 are compositionally biased toward basic residues; it reads LKKKKRYHRHTP. The homeobox DNA-binding region spans 110-169; sequence KKKRYHRHTPKQIQDLESVFKECAHPDEKQRLDLSRRLNLDPRQVKFWFQNRRTQMKTQI. The stretch at 158-233 forms a coiled coil; that stretch reads FQNRRTQMKT…SRLKDELDRV (76 aa). Residues 310–541 enclose the START domain; sequence DFDQRSRYLD…LQRQCECLTI (232 aa).

The protein belongs to the HD-ZIP homeobox family. Class IV subfamily. As to quaternary structure, interacts with CFL1. Binds with BBM. Expressed in trichomes forming at the base of young leaves, in endodermal cell lines around emergent lateral roots and in the epidermal layer of the stamen filament.

It localises to the nucleus. Probable transcription factor. Promotes cuticle development probably by modulating the expression of the downstream genes BDG and FDH, possibly repressed in a CFL1-dependent manner. Involved, together with PDF2, in the regulation of flower organs development by promoting the expression of APETALA 3 (AP3) in the epidermis and internal cell layers of developing flowers. In opposition to BBM, seems to promote cell differentiation and giant cell identity via transcriptional repression of meristem and cell proliferation genes. This Arabidopsis thaliana (Mouse-ear cress) protein is Homeobox-leucine zipper protein HDG1.